The sequence spans 179 residues: Cell division protein ZapC (179 aa).

Belongs to the ZapC family. In terms of assembly, interacts directly with FtsZ.

It is found in the cytoplasm. Contributes to the efficiency of the cell division process by stabilizing the polymeric form of the cell division protein FtsZ. Acts by promoting interactions between FtsZ protofilaments and suppressing the GTPase activity of FtsZ. This is Cell division protein ZapC from Aliivibrio salmonicida (strain LFI1238) (Vibrio salmonicida (strain LFI1238)).